A 1010-amino-acid polypeptide reads, in one-letter code: MSYDYHQNWGRDGGPRSSGGGYGGSYGGSHGGGHGGNRGSGGGGGGGGGRGGRGRHPGHLKGREIGLWYAKKQGQKNKEAERQERAVVHMDERREEQIVQLLHSVQTKNDKDEEAQISWFAPEDHGYGTEAPAENKPNSVKNVEHQEKKMINQEKRPFRIRDKYIDRDSEYLLQENEPDATLDQQLLEDLQKKKTDLRYIEMQRFREKLPSYGMQKELVNMIDNHQVTVISGETGCGKTTQVTQFILDNYIERGKGSACRIVCTQPRRISAISVAERVAAERAESCGNGNSTGYQIRLQSRLPRKQGSILYCTTGIILQWLQSDPHLSSVSHIVLDEIHERNLQSDVLMTVVKDLLSYRPDLKVVLMSATLNAEKFSEYFGNCPMIHIPGFTFPVVEYLLEDIIEKIRYVPEQKEHRSQFKKGFMQGHVNRQEKEEKEAIYKERWPGYLRELRQRYSASTVDVVEMMDDEKVDLNLIAALIRYIVLEEEDGAILVFLPGWDNISTLHDLLMSQVMFKSDKFIIIPLHSLMPTVNQTQVFKRTPPGVRKIVIATNIAETSITIDDVVYVIDGGKIKETHFDTQNNISTMSAEWVSKANAKQRKGRAGRVQPGHCYHLYNSLRASLLDDYQLPEILRTPLEELCLQIKILRLGGIAHFLSRLMDPPSNEAVLLSIKHLMELNALDKQEELTPLGVHLARLPVEPHIGKMILFGALFCCLDPVLTIAASLSFKDPFVIPLGKEKVADARRKELAKDTKSDHLTVVNAFKGWEKAKQRGFRYEKDYCWEYFLSSNTLQMLHNMKGQFAEHLLGAGFVSSRNPQDPESNINSDNEKIIKAVICAGLYPKVAKIRLNLGKKRKMVKVYTKTDGVVAIHPKSVNVEQTEFNYNWLIYHLKMRTSSIYLYDCTEVSPYCLLFFGGDISIQKDNDQETIAVDEWIIFQSPARIAHLVKELRKELDILLQEKIESPHPVDWKDTKSRDCAVLSAIIDLIKTQEKATPRNLPPRFQDGYYS.

Residues 1–54 (MSYDYHQNWGRDGGPRSSGGGYGGSYGGSHGGGHGGNRGSGGGGGGGGGRGGRG) are required for recruitment to cytoplasmic stress granules. The segment at 1-63 (MSYDYHQNWG…GRHPGHLKGR (63 aa)) is disordered. The tract at residues 1-107 (MSYDYHQNWG…IVQLLHSVQT (107 aa)) is required for the pre-miR-134 transport. The segment at 1–202 (MSYDYHQNWG…KKTDLRYIEM (202 aa)) is necessary for nuclear and nucleolar caps localizations. Gly residues predominate over residues 16–51 (RSSGGGYGGSYGGSHGGGHGGNRGSGGGGGGGGGRG). The interval 56–78 (HPGHLKGREIGLWYAKKQGQKNK) is DSM (DHX36-specific motif). The interval 56 to 108 (HPGHLKGREIGLWYAKKQGQKNKEAERQERAVVHMDERREEQIVQLLHSVQTK) is required for G4-DNA- and G4-RNA-binding. RecA-like domain stretches follow at residues 109–388 (NDKD…MIHI) and 389–630 (PGFT…DYQL). The Helicase ATP-binding domain maps to 219–389 (VNMIDNHQVT…FGNCPMIHIP (171 aa)). 235–240 (GCGKTT) provides a ligand contact to ATP. The necessary for interaction with single-stranded DNA at the 3'-end of the G4-DNA structure stretch occupies residues 267-319 (RRISAISVAERVAAERAESCGNGNSTGYQIRLQSRLPRKQGSILYCTTGIILQ). The DEAH box motif lies at 336–339 (DEIH). 2 residues coordinate Mg(2+): glutamate 337 and histidine 339. One can recognise a Helicase C-terminal domain in the interval 479–649 (ALIRYIVLEE…ELCLQIKILR (171 aa)). Positions 500–559 (WDNISTLHDLLMSQVMFKSDKFIIIPLHSLMPTVNQTQVFKRTPPGVRKIVIATNIAETS) are necessary for interaction with single-stranded DNA at the 3'-end of the G4-DNA structure. The Nuclear localization signal signature appears at 519 to 530 (DKFIIIPLHSLM). ATP-binding positions include serine 559 and 604-607 (RAGR). The segment at 631-700 (PEILRTPLEE…LGVHLARLPV (70 aa)) is WH domain. 3 necessary for interaction with single-stranded DNA at the 3'-end of the G4-DNA structure regions span residues 640-699 (ELCL…ARLP), 851-862 (NLGKKRKMVKVY), and 872-902 (HPKS…IYLY). The segment at 843 to 907 (PKVAKIRLNL…SIYLYDCTEV (65 aa)) is OB-fold-like subdomains. At lysine 949 the chain carries N6-acetyllysine. Serine 965 carries the phosphoserine modification.

Found in a multi-helicase-TICAM1 complex at least composed of DHX36, DDX1, DDX21 and TICAM1; this complex exists in resting cells with or without dsRNA poly(I:C) ligand stimulation. Interacts (via C-terminus) with TICAM1 (via TIR domain). Interacts (via C-terminus) with DDX21; this interaction serves as bridges to TICAM1. Interacts with TERT; this interaction is dependent on the ability of DHX36 to bind to the G-quadruplex RNA (G4-RNA) structure present in the telomerase RNA template component (TERC). Interacts with DKC1; this interaction is dependent on the ability of DHX36 to bind to the G4-RNA structure present in TERC. Interacts with PARN; this interaction stimulates PARN to enhance uPA mRNA decay. Interacts with EXOSC3; this interaction occurs in a RNase-insensitive manner. Interacts with EXOSC10; this interaction occurs in a RNase-insensitive manner. Interacts with ILF3; this interaction occurs in a RNA-dependent manner. Interacts with ELAVL1; this interaction occurs in an RNA-dependent manner. Interacts with DDX5; this interaction occurs in a RNA-dependent manner. Interacts with DDX17; this interaction occurs in a RNA-dependent manner. Interacts with HDAC1; this interaction occurs in a RNA-dependent manner. Interacts with HDAC3; this interaction occurs in a RNA-dependent manner. Interacts with HDAC4. Interacts with AGO1. Interacts with AGO2. Interacts with ERCC6. The cofactor is Mg(2+).

Its subcellular location is the nucleus. It is found in the cytoplasm. It localises to the cytosol. The protein resides in the stress granule. The protein localises to the nucleus speckle. Its subcellular location is the chromosome. It is found in the telomere. It localises to the mitochondrion. The protein resides in the perikaryon. The protein localises to the cell projection. Its subcellular location is the dendrite. It is found in the axon. It catalyses the reaction ATP + H2O = ADP + phosphate + H(+). With respect to regulation, ATPase activity is enhanced in the presence of homomeric poly(U) RNAs, but not by double-stranded DNA (dsDNA), double-stranded RNA (dsRNA) and tRNA. Its function is as follows. Multifunctional ATP-dependent helicase that unwinds G-quadruplex (G4) structures. Plays a role in many biological processes such as genomic integrity, gene expression regulations and as a sensor to initiate antiviral responses. G4 structures correspond to helical structures containing guanine tetrads. Binds with high affinity to and unwinds G4 structures that are formed in nucleic acids (G4-DNA and G4-RNA). Plays a role in genomic integrity. Converts the G4-RNA structure present in telomerase RNA template component (TREC) into a double-stranded RNA to promote P1 helix formation that acts as a template boundary ensuring accurate reverse transcription. Plays a role in transcriptional regulation. Resolves G4-DNA structures in promoters of genes, such as YY1, KIT/c-kit and ALPL and positively regulates their expression. Plays a role in post-transcriptional regulation. Unwinds a G4-RNA structure located in the 3'-UTR polyadenylation site of the pre-mRNA TP53 and stimulates TP53 pre-mRNA 3'-end processing in response to ultraviolet (UV)-induced DNA damage. Binds to the precursor-microRNA-134 (pre-miR-134) terminal loop and regulates its transport into the synapto-dendritic compartment. Involved in the pre-miR-134-dependent inhibition of target gene expression and the control of dendritic spine size. Plays a role in the regulation of cytoplasmic mRNA translation and mRNA stability. Binds to both G4-RNA structures and alternative non-quadruplex-forming sequence within the 3'-UTR of the PITX1 mRNA regulating negatively PITX1 protein expression. Binds to both G4-RNA structure in the 5'-UTR and AU-rich elements (AREs) localized in the 3'-UTR of NKX2-5 mRNA to either stimulate protein translation or induce mRNA decay in an ELAVL1-dependent manner, respectively. Also binds to ARE sequences present in several mRNAs mediating exosome-mediated 3'-5' mRNA degradation. Involved in cytoplasmic urokinase-type plasminogen activator (uPA) mRNA decay. Component of a multi-helicase-TICAM1 complex that acts as a cytoplasmic sensor of viral double-stranded RNA (dsRNA) and plays a role in the activation of a cascade of antiviral responses including the induction of pro-inflammatory cytokines via the adapter molecule TICAM1. Required for the early embryonic development and hematopoiesis. Involved in the regulation of cardioblast differentiation and proliferation during heart development. Involved in spermatogonia differentiation. May play a role in ossification. The chain is ATP-dependent DNA/RNA helicase DHX36 from Bos taurus (Bovine).